A 601-amino-acid polypeptide reads, in one-letter code: Elongation factor 4 (601 aa).

The 183-residue stretch at D2 to T184 folds into the tr-type G domain. GTP contacts are provided by residues D14–T19 and N131–D134.

It belongs to the TRAFAC class translation factor GTPase superfamily. Classic translation factor GTPase family. LepA subfamily.

The protein resides in the cell inner membrane. The enzyme catalyses GTP + H2O = GDP + phosphate + H(+). Functionally, required for accurate and efficient protein synthesis under certain stress conditions. May act as a fidelity factor of the translation reaction, by catalyzing a one-codon backward translocation of tRNAs on improperly translocated ribosomes. Back-translocation proceeds from a post-translocation (POST) complex to a pre-translocation (PRE) complex, thus giving elongation factor G a second chance to translocate the tRNAs correctly. Binds to ribosomes in a GTP-dependent manner. The sequence is that of Elongation factor 4 from Polynucleobacter necessarius subsp. necessarius (strain STIR1).